A 220-amino-acid chain; its full sequence is Sec-independent protein translocase protein TatB (220 aa).

The helical transmembrane segment at 1–21 (MFDIGFSELLLVLVIGLVVLG) threads the bilayer. The tract at residues 192-220 (KQQIDTIDSHGTDLSSAGPSRIHQPGGDQ) is disordered.

Belongs to the TatB family. In terms of assembly, the Tat system comprises two distinct complexes: a TatABC complex, containing multiple copies of TatA, TatB and TatC subunits, and a separate TatA complex, containing only TatA subunits. Substrates initially bind to the TatABC complex, which probably triggers association of the separate TatA complex to form the active translocon.

The protein resides in the cell inner membrane. Part of the twin-arginine translocation (Tat) system that transports large folded proteins containing a characteristic twin-arginine motif in their signal peptide across membranes. Together with TatC, TatB is part of a receptor directly interacting with Tat signal peptides. TatB may form an oligomeric binding site that transiently accommodates folded Tat precursor proteins before their translocation. The protein is Sec-independent protein translocase protein TatB of Yersinia pestis bv. Antiqua (strain Antiqua).